A 386-amino-acid chain; its full sequence is Patatin-06 (386 aa).

The N-terminal stretch at 1 to 23 is a signal peptide; it reads MATTKSFLILFFMILATTSSTCA. A PNPLA domain is found at 32–229; it reads LSIDGGGIKG…TVGDPALLSL (198 aa). Positions 36–41 match the GXGXXG motif; it reads GGGIKG. The short motif at 75-79 is the GXSXG element; sequence GTSTG. Serine 77 functions as the Nucleophile in the catalytic mechanism. Asparagine 115 is a glycosylation site (N-linked (GlcNAc...) asparagine). Aspartate 215 serves as the catalytic Proton acceptor. A DGA/G motif is present at residues 215 to 217; it reads DGG. The stretch at 321–384 forms a coiled coil; the sequence is ENALTGTTTE…NRKKLRANKA (64 aa).

Belongs to the patatin family. In terms of tissue distribution, tuber.

It is found in the vacuole. In terms of biological role, probable lipolytic acyl hydrolase (LAH), an activity which is thought to be involved in the response of tubers to pathogens. The sequence is that of Patatin-06 from Solanum tuberosum (Potato).